A 2517-amino-acid chain; its full sequence is Protein capicua homolog (2517 aa).

6 disordered regions span residues Met-1–Tyr-197, Leu-300–Pro-325, Pro-342–Lys-483, Glu-531–Ser-579, Ser-608–Arg-640, and Val-658–Val-767. Positions Glu-57–Ala-67 are enriched in acidic residues. The span at Glu-91–Arg-101 shows a compositional bias: basic and acidic residues. Composition is skewed to low complexity over residues Thr-158–Thr-167 and Leu-300–Ser-313. Positions His-396–Pro-405 are enriched in basic and acidic residues. The span at Leu-414–Ser-428 shows a compositional bias: pro residues. Residues Gly-451–Ala-477 are compositionally biased toward low complexity. Residues Ser-608–Val-619 are compositionally biased toward polar residues. Positions Asp-677–Ala-686 are enriched in pro residues. Over residues Thr-698 to Val-707 the composition is skewed to polar residues. Residues Gly-726–Ala-735 are compositionally biased toward gly residues. 2 positions are modified to phosphoserine: Ser-776 and Ser-780. Disordered stretches follow at residues Ile-812–Gly-842, Pro-955–Arg-1110, Cys-1179–Val-1220, Ser-1235–Gly-1274, Ser-1290–Glu-1347, Arg-1379–Thr-1539, and Ile-1595–Gly-1628. The tract at residues Glu-937–Pro-955 is interaction with ATXN1. Positions Asp-959–Lys-981 are enriched in polar residues. Ser-1055 and Ser-1082 each carry phosphoserine. Basic and acidic residues-rich tracts occupy residues Pro-1087–Arg-1110, Cys-1179–Ser-1188, and Gly-1200–Met-1209. Arg-1099 bears the Omega-N-methylarginine mark. The HMG box DNA-binding region spans Ile-1109 to Lys-1177. A Phosphoserine modification is found at Ser-1186. A compositionally biased stretch (polar residues) spans Ser-1235–Cys-1245. Ser-1271 is modified (phosphoserine). Residues Gly-1305–Gly-1323 are compositionally biased toward low complexity. Residues Ser-1340, Ser-1345, and Ser-1405 each carry the phosphoserine modification. Over residues Pro-1418 to Pro-1430 the composition is skewed to pro residues. Over residues Ser-1439–Ala-1456 the composition is skewed to low complexity. Polar residues predominate over residues Thr-1457–Gly-1474. Phosphoserine is present on residues Ser-1609, Ser-1630, and Ser-1648. An Asymmetric dimethylarginine modification is found at Arg-1772. Residues Gln-1799–Pro-1818 are disordered. At Arg-1843 the chain carries Omega-N-methylarginine. Disordered regions lie at residues Ala-2039–Ala-2064, Ser-2100–Glu-2342, and Ala-2430–Arg-2517. Over residues Ala-2051–Ala-2064 the composition is skewed to low complexity. Pro residues-rich tracts occupy residues Gly-2110 to Pro-2119 and Pro-2136 to Pro-2145. The segment covering Glu-2146–Ser-2155 has biased composition (low complexity). At Lys-2177 the chain carries N6-acetyllysine. A compositionally biased stretch (pro residues) spans Pro-2198–Ala-2209. Thr-2200 carries the post-translational modification Phosphothreonine. Ser-2203 bears the Phosphoserine mark. Positions Val-2210 to Gly-2225 are enriched in low complexity. The span at Lys-2249–Glu-2278 shows a compositional bias: basic and acidic residues. 6 positions are modified to phosphoserine: Ser-2260, Ser-2282, Ser-2287, Ser-2291, Ser-2298, and Ser-2306. Thr-2307 is modified (phosphothreonine). Ser-2311 and Ser-2318 each carry phosphoserine. The segment covering Ala-2457–Thr-2469 has biased composition (pro residues). Ser-2504 bears the Phosphoserine mark.

In terms of assembly, found in a complex with ATXN1 and ATXN1L. As to quaternary structure, interacts with ATXN1. As to expression, expressed in fetal brain.

It is found in the nucleus. Functionally, transcriptional repressor which plays a role in development of the central nervous system (CNS). In concert with ATXN1 and ATXN1L, involved in brain development. This is Protein capicua homolog (CIC) from Homo sapiens (Human).